Here is a 441-residue protein sequence, read N- to C-terminus: GTPase Der (441 aa).

EngA-type G domains lie at 2-164 (QKVA…PADE) and 173-343 (IRIS…EKWQ). Residues 8 to 15 (GRPNVGKS), 55 to 59 (DTGGL), 116 to 119 (NKID), 179 to 186 (GRPNVGKS), 226 to 230 (DTAGI), and 288 to 291 (NKWD) contribute to the GTP site. The KH-like domain maps to 344–428 (SRIPTAELNR…PVRLKWKEKG (85 aa)).

This sequence belongs to the TRAFAC class TrmE-Era-EngA-EngB-Septin-like GTPase superfamily. EngA (Der) GTPase family. In terms of assembly, associates with the 50S ribosomal subunit.

In terms of biological role, GTPase that plays an essential role in the late steps of ribosome biogenesis. The chain is GTPase Der from Deinococcus geothermalis (strain DSM 11300 / CIP 105573 / AG-3a).